A 486-amino-acid chain; its full sequence is MSNNFKDDFEKNRQSIDTNSHQDHTEDVEKDQSELEHQDTIENTEQQFPPRNAQRRKRRRDLATNHNKQVHNESQTSEDNVQNEAGTIDDRQVESSHSTESQEPSHQDSTPQHEEGYYNKNAFAMDKSHPEPIEDNDKHETIKEAENNTEHSTVSDKSEAEQSQQPKPYFATGANQANTSKDKHDDVTVKQDKDESKDHHSGKKGAAIGAGTAGVAGAAGAMGVSKAKKHSNDAQNKSNSGKVNNSTEDKASEDKSKEHHNGKKGAAIGAGTAGLAGGAASNSASAASKPHASNNASQNNDEHDHHDRDKERKKGGMAKVLLPLIAAVLIIGALAIFGGMALNNHNNGTKENKIANTNKNNADESKDKDTSKDASKDKSKSTDSDKSKDDQDKATKDESDNDQNNANQANNQAQNNQNQQQANQNQQQQQQRQGGGQRHTVNGQENLYRIAIQYYGSGSPENVEKIRRANGLSGNNIRNGQQIVIP.

A compositionally biased stretch (basic and acidic residues) spans 1-40; the sequence is MSNNFKDDFEKNRQSIDTNSHQDHTEDVEKDQSELEHQDT. The tract at residues 1-314 is disordered; that stretch reads MSNNFKDDFE…HHDRDKERKK (314 aa). Over 2–204 the chain is Extracellular; that stretch reads SNNFKDDFEK…ESKDHHSGKK (203 aa). Positions 14 to 34 are elastin-binding; it reads QSIDTNSHQDHTEDVEKDQSE. Over residues 64–85 the composition is skewed to polar residues; the sequence is TNHNKQVHNESQTSEDNVQNEA. 3 stretches are compositionally biased toward basic and acidic residues: residues 103 to 117, 126 to 160, and 180 to 199; these read EPSH…EEGY, DKSH…KSEA, and SKDK…SKDH. Residues 204-225 show a composition bias toward low complexity; the sequence is KGAAIGAGTAGVAGAAGAMGVS. The chain crosses the membrane as a helical span at residues 205-225; the sequence is GAAIGAGTAGVAGAAGAMGVS. Residues 226-319 are Cytoplasmic-facing; it reads KAKKHSNDAQ…KERKKGGMAK (94 aa). Residues 233–246 are compositionally biased toward polar residues; sequence DAQNKSNSGKVNNS. The segment covering 247–259 has biased composition (basic and acidic residues); that stretch reads TEDKASEDKSKEH. Positions 278-297 are enriched in low complexity; that stretch reads GAASNSASAASKPHASNNAS. Over residues 300 to 314 the composition is skewed to basic and acidic residues; it reads NDEHDHHDRDKERKK. A helical transmembrane segment spans residues 320 to 340; that stretch reads VLLPLIAAVLIIGALAIFGGM. Residues 341–486 are Extracellular-facing; the sequence is ALNNHNNGTK…IRNGQQIVIP (146 aa). Positions 351–440 are disordered; that stretch reads ENKIANTNKN…QRQGGGQRHT (90 aa). The segment covering 361-398 has biased composition (basic and acidic residues); the sequence is NADESKDKDTSKDASKDKSKSTDSDKSKDDQDKATKDE. Positions 403–431 are enriched in low complexity; that stretch reads QNNANQANNQAQNNQNQQQANQNQQQQQQ. The 49-residue stretch at 437 to 485 folds into the LysM domain; the sequence is QRHTVNGQENLYRIAIQYYGSGSPENVEKIRRANGLSGNNIRNGQQIVI.

It is found in the cell membrane. In terms of biological role, promotes binding of soluble elastin peptides and tropoelastin to S.aureus cells although it is not able to promote bacterial adherence to immobilized elastin and, therefore, is not a microbial surface component recognizing adhesive matrix molecule (MSCRAMM). The polypeptide is Elastin-binding protein EbpS (ebpS) (Staphylococcus aureus (strain MRSA252)).